The chain runs to 172 residues: Putative Dresden prostate carcinoma protein 2 (172 aa).

The tract at residues 40–61 (QCEEEEAMTPRPTKARAPLPSA) is disordered.

Very high expression in prostate and prostate cancer. Faint expression in other tissues.

The polypeptide is Putative Dresden prostate carcinoma protein 2 (HMGN2P46) (Homo sapiens (Human)).